A 188-amino-acid chain; its full sequence is Elongation factor P (188 aa).

It belongs to the elongation factor P family.

The protein localises to the cytoplasm. The protein operates within protein biosynthesis; polypeptide chain elongation. Involved in peptide bond synthesis. Stimulates efficient translation and peptide-bond synthesis on native or reconstituted 70S ribosomes in vitro. Probably functions indirectly by altering the affinity of the ribosome for aminoacyl-tRNA, thus increasing their reactivity as acceptors for peptidyl transferase. This is Elongation factor P from Streptomyces avermitilis (strain ATCC 31267 / DSM 46492 / JCM 5070 / NBRC 14893 / NCIMB 12804 / NRRL 8165 / MA-4680).